The sequence spans 101 residues: Small ribosomal subunit protein bS6 (101 aa).

It belongs to the bacterial ribosomal protein bS6 family.

Functionally, binds together with bS18 to 16S ribosomal RNA. The sequence is that of Small ribosomal subunit protein bS6 from Micrococcus luteus (strain ATCC 4698 / DSM 20030 / JCM 1464 / CCM 169 / CCUG 5858 / IAM 1056 / NBRC 3333 / NCIMB 9278 / NCTC 2665 / VKM Ac-2230) (Micrococcus lysodeikticus).